A 440-amino-acid polypeptide reads, in one-letter code: 3-phosphoshikimate 1-carboxyvinyltransferase (440 aa).

The 3-phosphoshikimate site is built by Lys29 and Arg34. Lys29 lines the phosphoenolpyruvate pocket. Residues Gly99 and Arg128 each coordinate phosphoenolpyruvate. 3-phosphoshikimate is bound by residues Ser171, Ser172, Gln173, Ser199, Asp316, and Lys343. Gln173 provides a ligand contact to phosphoenolpyruvate. The Proton acceptor role is filled by Asp316. The phosphoenolpyruvate site is built by Arg347, Arg390, and Lys416.

The protein belongs to the EPSP synthase family. Monomer.

Its subcellular location is the cytoplasm. It catalyses the reaction 3-phosphoshikimate + phosphoenolpyruvate = 5-O-(1-carboxyvinyl)-3-phosphoshikimate + phosphate. It participates in metabolic intermediate biosynthesis; chorismate biosynthesis; chorismate from D-erythrose 4-phosphate and phosphoenolpyruvate: step 6/7. In terms of biological role, catalyzes the transfer of the enolpyruvyl moiety of phosphoenolpyruvate (PEP) to the 5-hydroxyl of shikimate-3-phosphate (S3P) to produce enolpyruvyl shikimate-3-phosphate and inorganic phosphate. This is 3-phosphoshikimate 1-carboxyvinyltransferase from Deinococcus geothermalis (strain DSM 11300 / CIP 105573 / AG-3a).